We begin with the raw amino-acid sequence, 277 residues long: Polar tube protein 2 (277 aa).

The N-terminal stretch at 1–18 (MLLLLAITAVVSATMVHP) is a signal peptide. Asn-134 is a glycosylation site (N-linked (GlcNAc...) asparagine). The segment covering 237–251 (QKKEVKDTKEGEKSA) has biased composition (basic and acidic residues). Residues 237–277 (QKKEVKDTKEGEKSASQDSDGEGTAEDAEVQQPSADGEGLE) form a disordered region. Over residues 255–265 (SDGEGTAEDAE) the composition is skewed to acidic residues.

In terms of assembly, interacts with PTP1 and PTP3.

The protein localises to the spore polar tube. Its function is as follows. Involved in formation of a polar tube through which the infectious agent is passed on to the host cell. The sequence is that of Polar tube protein 2 (PTP2) from Encephalitozoon cuniculi (strain GB-M1) (Microsporidian parasite).